The chain runs to 258 residues: GTP cyclohydrolase FolE2 (258 aa).

This sequence belongs to the GTP cyclohydrolase IV family.

The enzyme catalyses GTP + H2O = 7,8-dihydroneopterin 3'-triphosphate + formate + H(+). Its pathway is cofactor biosynthesis; 7,8-dihydroneopterin triphosphate biosynthesis; 7,8-dihydroneopterin triphosphate from GTP: step 1/1. In terms of biological role, converts GTP to 7,8-dihydroneopterin triphosphate. In Geobacter sulfurreducens (strain ATCC 51573 / DSM 12127 / PCA), this protein is GTP cyclohydrolase FolE2.